Consider the following 250-residue polypeptide: UPF0246 protein cce_3295 (250 aa).

The protein belongs to the UPF0246 family.

This Crocosphaera subtropica (strain ATCC 51142 / BH68) (Cyanothece sp. (strain ATCC 51142)) protein is UPF0246 protein cce_3295.